The following is a 501-amino-acid chain: Ribose import ATP-binding protein RbsA (501 aa).

ABC transporter domains follow at residues 5-241 (LQLK…VGRK) and 252-495 (APGE…VGKL). Residue 37 to 44 (GENGAGKS) coordinates ATP.

This sequence belongs to the ABC transporter superfamily. Ribose importer (TC 3.A.1.2.1) family. As to quaternary structure, the complex is composed of an ATP-binding protein (RbsA), two transmembrane proteins (RbsC) and a solute-binding protein (RbsB).

The protein localises to the cell inner membrane. The enzyme catalyses D-ribose(out) + ATP + H2O = D-ribose(in) + ADP + phosphate + H(+). In terms of biological role, part of the ABC transporter complex RbsABC involved in ribose import. Responsible for energy coupling to the transport system. The polypeptide is Ribose import ATP-binding protein RbsA (Salmonella typhimurium (strain LT2 / SGSC1412 / ATCC 700720)).